The chain runs to 2167 residues: MTHSPATSEDEERHSASECPEGGSESDSSPDGPGRGPQGTRGRGSGAPGNLASTRGLQGRSMSVPDDAHFSMMVFRIGIPDLHQTKCLRFNPDATIWTAKQQVLCALSESLQDVLNYGLFQPATSGRDANFLEEERLLREYPQSFEKGVPYLEFRYKTRVYKQTNLDEKQLAKLHTKTGLKKFLEYVQLGTSDKVARLLDKGLDPNYHDSDSGETPLTLAAQTEGSVEVIRTLCLGGAHIDFRARDGMTALHKAACARHCLALTALLDLGGSPNYKDRRGLTPLFHTAMVGGDPRCCELLLYNRAQLGIADENGWQEIHQACQRGHSQHLEHLLFYGAEPGAQNASGNTALHICALYNKETCARILLYRGANKDVKNNNGQTPFQVAVIAGNFELGELIRNHREQDVVPFQESPKYAARRRGPPGAGLTVPPALLRANSDTSMALPDWMVFSAPGASSSGTPGPTSGSQGQSQPSAPSTKLSSGTLRSASSPRGARARSPSRGRHPEDAKRQPRGRPSSSGTPRDGPAGGTGGSGGPGGSLGSRGRRRKLYSAVPGRSFMAVKSYQAQGEGEISLSKGEKIKVLSIGEGGFWEGQVKGRVGWFPSDCLEEVANRSQEGRQESRSDKAKRLFRHYTVGSYDSFDAPSLIDGIDSGSDYIIKEKTVLLQKKDSEGFGFVLRGAKAQTPIEEFTPTPAFPALQYLESVDEGGVAWRAGLRMGDFLIEVNGQNVVKVGHRQVVNMIRQGGNTLMVKVVMVTRHPDMDEAVHKKASQQAKRLPPPAISLRSKSMTSELEEMVSPWKKKIEYEQQPAAVPSMEKKRTVYQMALNKLDEILAAAQQTISASESPGPGGLASLGKHRPKGFFATESSFDPHHRSQPSYDRPSFLPPGPGLMLRQKSIGAAEDDRPYLAPPAMKFSRSLSVPGSEDIPPPPTTSPPEPPYSTPPAPSSSGRLTPSPRGGPFNPGSGGPLPASSPSSFDGPSPPDPRSGGREKSLYHSGALPPAHHHPPHHHHHHAPPPQPHHHHAHPPHPPEMETGGSPDDPPPRLALGPQPSLRGWRGGGPSPTSGAPSPSHHSSSGGSSGPAQAPALRYFQLPPRAASAAMYVPARSGRGRKGPLVKQTKVEGEPQKGSLPPASSPTSPALPRSEPPPAGPSEKNSIPIPTIIIKAPSTSSSGRSSQGSSTEAEPPTQPDGAGGGGSSPSPAPATSPVPPSPSPVPTPASPSGPATLDFTSQFGAALVGAARREGGWQNEARRRSTLFLSTDAGDEDGGDSGLGPGAPPGPRLRHSKSIDEGMFSAEPYLRLESGGSSGGYGAYAAGSRAYGGSGSSSAFTSFLPPRPLVHPLTGKALDPASPLGLALAARERALKESSEGGVTPQPPPRPPSPRYDAPPPTLHHHSPHSPHSPHARHEPVLRLWGDPARRELGYRAGLGSQEKALTASPPAARRSLLHRLPPTAPGVGPLLLQLGPEPPTPHPGVSKAWRTAAPEEPERLPLHVRFLENCQARPPPAGTRGSSTEDGPGVPPPSPRRVLPTSPTSPRGNEENGLPLLVLPPPAPSVDVDDGEFLFAEPLPPPLEFSNSFEKPESPLTPGPPHPLPDPPSPATPLPAAPPPAVAAAPPTLDSTASSLTSYDSEVATLTQGAPAAPGDPPAPGPPAPAAPAPPAPQPGPDPPPGTDSGIEEVDSRSSSDHPLETISSASTLSSLSAEGGGNTGGVAGGGAGVASGTELLDTYVAYLDGQAFGGSGTPGPPYPPQLMTPSKLRGRALGTSGNLRPGPSGGLRDPVTPTSPTVSVTGAGTDGLLALSACSGPSTAGVAGGPVAVEPEVPPVPLPTASSLPRKLLPWEEGPGPPPPPLPGPLSQPQASALATVKASIISELSSKLQQFGGASTAGGALPWARGGSGGSTDSHHGGASYIPERTSSLQRQRLSEDSQTSLLSKPSSSIFQNWPKPPLPPLPTGSGVSSSTAAAPGATSPSASSASASTRHLQGVEFEMRPPLLRRAPSPSLLPASDHKVSPAPRPSSLPILPSGPLYPGLFDIRSSPTGGAGGSADPFAPVFVPPHPGISGGLGGALSGASRSLSPTRLLSLPPDKPFGAKPLGFWTKFDVADWLEWLGLSEHRAQFLDHEIDGSHLPALTKEDYVDLGVTRVGHRMNIDRALKFFLER.

The tract at residues 1–63 (MTHSPATSED…TRGLQGRSMS (63 aa)) is disordered. Residues 17 to 32 (SECPEGGSESDSSPDG) are compositionally biased toward low complexity. The segment covering 33–47 (PGRGPQGTRGRGSGA) has biased composition (gly residues). Arginine 43 carries the omega-N-methylarginine modification. A Phosphotyrosine modification is found at tyrosine 186. 6 ANK repeats span residues 212–242 (SGET…HIDF), 246–275 (DGMT…SPNY), 279–309 (RGLT…QLGI), 313–342 (NGWQ…EPGA), 346–375 (SGNT…NKDV), and 379–407 (NGQT…EQDV). Disordered stretches follow at residues 413 to 432 (SPKY…TVPP) and 454 to 546 (PGAS…SRGR). The span at 454 to 479 (PGASSSGTPGPTSGSQGQSQPSAPST) shows a compositional bias: low complexity. Residues 527–542 (PAGGTGGSGGPGGSLG) show a composition bias toward gly residues. Position 540 is a phosphoserine (serine 540). An Omega-N-methylarginine modification is found at arginine 544. An SH3 domain is found at 554 to 613 (VPGRSFMAVKSYQAQGEGEISLSKGEKIKVLSIGEGGFWEGQVKGRVGWFPSDCLEEVAN). Positions 663-757 (TVLLQKKDSE…TLMVKVVMVT (95 aa)) constitute a PDZ domain. Phosphoserine occurs at positions 671 and 791. The disordered stretch occupies residues 841-894 (ISASESPGPGGLASLGKHRPKGFFATESSFDPHHRSQPSYDRPSFLPPGPGLML). At serine 898 the chain carries Phosphoserine. Disordered stretches follow at residues 917-1233 (SRSL…LDFT) and 1245-1290 (RREG…RHSK). The segment covering 928-947 (IPPPPTTSPPEPPYSTPPAP) has biased composition (pro residues). The residue at position 958 (arginine 958) is an Omega-N-methylarginine. The span at 969–980 (PLPASSPSSFDG) shows a compositional bias: low complexity. Over residues 1004–1028 (AHHHPPHHHHHHAPPPQPHHHHAHP) the composition is skewed to basic residues. Arginine 1059 carries the post-translational modification Omega-N-methylarginine. Residues 1064 to 1089 (SPTSGAPSPSHHSSSGGSSGPAQAPA) are compositionally biased toward low complexity. 2 positions are modified to omega-N-methylarginine: arginine 1098 and arginine 1109. 2 stretches are compositionally biased toward low complexity: residues 1132-1146 (SLPP…ALPR) and 1171-1184 (STSS…GSST). The segment covering 1203 to 1224 (SPAPATSPVPPSPSPVPTPASP) has biased composition (pro residues). A compositionally biased stretch (basic and acidic residues) spans 1245–1256 (RREGGWQNEARR). The residue at position 1257 (arginine 1257) is an Asymmetric dimethylarginine. Residue serine 1291 is modified to Phosphoserine. Disordered stretches follow at residues 1308-1331 (GGSS…GSSS), 1361-1417 (LAAR…VLRL), 1429-1458 (RAGL…PPTA), 1500-1725 (FLEN…AGVA), 1740-1790 (GQAF…TPTS), 1828-1866 (VPPV…QPQA), 1898-1988 (PWAR…STRH), and 2002-2029 (RRAP…LPIL). A compositionally biased stretch (basic and acidic residues) spans 1363-1372 (ARERALKESS). Positions 1378 to 1395 (PQPPPRPPSPRYDAPPPT) are enriched in pro residues. A compositionally biased stretch (basic residues) spans 1396–1408 (LHHHSPHSPHSPH). Arginine 1429 is modified (omega-N-methylarginine). Serine 1442 bears the Phosphoserine mark. The span at 1530–1541 (RRVLPTSPTSPR) shows a compositional bias: low complexity. Residues 1589–1615 (PLTPGPPHPLPDPPSPATPLPAAPPPA) show a composition bias toward pro residues. Residues 1624-1641 (DSTASSLTSYDSEVATLT) are compositionally biased toward polar residues. The span at 1648–1676 (PGDPPAPGPPAPAAPAPPAPQPGPDPPPG) shows a compositional bias: pro residues. The span at 1684 to 1694 (VDSRSSSDHPL) shows a compositional bias: basic and acidic residues. Residues 1695-1708 (ETISSASTLSSLSA) are compositionally biased toward low complexity. The span at 1709-1724 (EGGGNTGGVAGGGAGV) shows a compositional bias: gly residues. Pro residues predominate over residues 1850–1861 (PGPPPPPLPGPL). Arginine 1901 is modified (omega-N-methylarginine). Low complexity-rich tracts occupy residues 1934–1945 (SQTSLLSKPSSS), 1960–1985 (TGSG…ASAS), and 2002–2012 (RRAPSPSLLPA). Omega-N-methylarginine occurs at positions 2022, 2042, and 2080. The region spanning 2104 to 2167 (WTKFDVADWL…DRALKFFLER (64 aa)) is the SAM domain.

Belongs to the SHANK family. In terms of assembly, may homomultimerize via its SAM domain. Interacts with the C-terminus of SSTR2 via the PDZ domain. Interacts with SHARPIN, SPTAN1, HOMER1 and DLGAP1/GKAP. Part of a complex with DLG4/PSD-95 and DLGAP1/GKAP. Interacts with BAIAP2. Interacts with IGSF9. Interacts with HOMER1 and HOMER3. In brain, highly expressed in cortex, hippocampus and cerebellum.

Its subcellular location is the cytoplasm. The protein localises to the synapse. It localises to the postsynaptic density. Seems to be an adapter protein in the postsynaptic density (PSD) of excitatory synapses that interconnects receptors of the postsynaptic membrane including NMDA-type and metabotropic glutamate receptors, and the actin-based cytoskeleton. Plays a role in the structural and functional organization of the dendritic spine and synaptic junction. Overexpression promotes maturation of dendritic spines and the enlargement of spine heads via its ability to recruit Homer to postsynaptic sites, and enhances presynaptic function. This is SH3 and multiple ankyrin repeat domains protein 1 (Shank1) from Mus musculus (Mouse).